Here is a 223-residue protein sequence, read N- to C-terminus: ATP-dependent dethiobiotin synthetase BioD (223 aa).

12 to 17 (EIGKTH) serves as a coordination point for ATP. Thr16 lines the Mg(2+) pocket. Lys37 is a catalytic residue. A substrate-binding site is contributed by Ser41. ATP contacts are provided by residues Asp52 and 118-121 (EGVG). Residues Asp52 and Glu118 each coordinate Mg(2+).

This sequence belongs to the dethiobiotin synthetase family. As to quaternary structure, homodimer. Mg(2+) serves as cofactor.

Its subcellular location is the cytoplasm. It catalyses the reaction (7R,8S)-7,8-diammoniononanoate + CO2 + ATP = (4R,5S)-dethiobiotin + ADP + phosphate + 3 H(+). It participates in cofactor biosynthesis; biotin biosynthesis; biotin from 7,8-diaminononanoate: step 1/2. Functionally, catalyzes a mechanistically unusual reaction, the ATP-dependent insertion of CO2 between the N7 and N8 nitrogen atoms of 7,8-diaminopelargonic acid (DAPA, also called 7,8-diammoniononanoate) to form a ureido ring. The protein is ATP-dependent dethiobiotin synthetase BioD of Acidiphilium cryptum (strain JF-5).